The primary structure comprises 576 residues: NADH-quinone oxidoreductase subunit C/D (576 aa).

Positions 1–176 (MAWISLEKAK…NLEGLFNYDR (176 aa)) are NADH dehydrogenase I subunit C. An NADH dehydrogenase I subunit D region spans residues 200–576 (SQIVLNWGPL…IDPVVGETDR (377 aa)).

In the N-terminal section; belongs to the complex I 30 kDa subunit family. It in the C-terminal section; belongs to the complex I 49 kDa subunit family. As to quaternary structure, NDH-1 is composed of 13 different subunits. Subunits NuoB, CD, E, F, and G constitute the peripheral sector of the complex.

It is found in the cell inner membrane. It catalyses the reaction a quinone + NADH + 5 H(+)(in) = a quinol + NAD(+) + 4 H(+)(out). In terms of biological role, NDH-1 shuttles electrons from NADH, via FMN and iron-sulfur (Fe-S) centers, to quinones in the respiratory chain. The immediate electron acceptor for the enzyme in this species is believed to be ubiquinone. Couples the redox reaction to proton translocation (for every two electrons transferred, four hydrogen ions are translocated across the cytoplasmic membrane), and thus conserves the redox energy in a proton gradient. The sequence is that of NADH-quinone oxidoreductase subunit C/D from Sulfurihydrogenibium sp. (strain YO3AOP1).